A 653-amino-acid polypeptide reads, in one-letter code: Beta-galactosidase-1-like protein 3 (653 aa).

E227 acts as the Proton donor in catalysis. The Nucleophile role is filled by E301.

This sequence belongs to the glycosyl hydrolase 35 family.

This is Beta-galactosidase-1-like protein 3 (GLB1L3) from Homo sapiens (Human).